A 153-amino-acid chain; its full sequence is MGVLDHVSEMFDCSHGHKIKKRKQLQTVEIKVKMDCEGCERKVRRSVEGMKGVSSVTLEPKAHKVTVVGYVDPNKVVARMSHRTGKKVELWPYVPYDVVAHPYAAGVYDKKAPSGYVRRVDDPGVSQLARASSTEVRYTTAFSDENPAACVVM.

The region spanning 25 to 89 is the HMA domain; it reads LQTVEIKVKM…MSHRTGKKVE (65 aa). A metal cation contacts are provided by Cys36 and Cys39. The residue at position 150 (Cys150) is a Cysteine methyl ester. Cys150 is lipidated: S-farnesyl cysteine. A propeptide spans 151-153 (removed in mature form); sequence VVM.

This sequence belongs to the HIPP family. In terms of assembly, interacts with ZHD11/HB29 and ACBP2 (via ankyrin repeats). May also interact with HB21. As to expression, expressed in roots, stems and flowers. Lower expression in siliques and leaves. Expressed in the vascular tissues. Detected in lateral roots, shoot apical meristem, petals of unopened flowers and weak expression in leaf vasculature.

It is found in the nucleus membrane. Its subcellular location is the cell membrane. In terms of biological role, heavy-metal-binding protein. Binds lead, cadmium and copper. May be involved in heavy-metal transport. May be involved in cadmium transport and play a role in cadmium detoxification. This Arabidopsis thaliana (Mouse-ear cress) protein is Heavy metal-associated isoprenylated plant protein 26.